Consider the following 251-residue polypeptide: Derlin-1 (251 aa).

Ser2 bears the N-acetylserine mark. At 2–15 (SDIGDWFRSIPAIT) the chain is on the cytoplasmic side. The helical transmembrane segment at 16–31 (RYWFAATVAVPLVGKL) threads the bilayer. Residues 32 to 69 (GLISPAYLFLWPEAFLYRFQIWRPITATFYFPVGPGTG) are Lumenal-facing. A helical transmembrane segment spans residues 70-89 (FLYLVNLYFLYQYSTRLETG). The Cytoplasmic portion of the chain corresponds to 90-94 (AFDGR). A helical transmembrane segment spans residues 95 to 115 (PADYLFMLLFNWICIVITGLA). Topologically, residues 116-122 (MDMQLLM) are lumenal. A helical membrane pass occupies residues 123–137 (IPLIMSVLYVWAQLN). Topologically, residues 138 to 154 (RDMIVSFWFGTRFKACY) are cytoplasmic. The helical transmembrane segment at 155-166 (LPWVILGFNYII) threads the bilayer. Residues 167–170 (GGSV) lie on the Lumenal side of the membrane. The helical transmembrane segment at 171–189 (INELIGNLVGHLYFFLMFR) threads the bilayer. The Cytoplasmic segment spans residues 190–251 (YPMDLGGRNF…WGQGFRLGDQ (62 aa)). Residue Ser201 is modified to Phosphoserine. Thr202 is subject to Phosphothreonine. Position 226 is a phosphoserine (Ser226). Residues 229-251 (RAADQNGGGGRHNWGQGFRLGDQ) are disordered. Positions 241-248 (NWGQGFRL) match the SHP-box motif.

The protein belongs to the derlin family. As to quaternary structure, homotetramer. The four subunits of the tetramer are arranged in a twofold symmetry. Forms heterooligomers with DERL2 and DERL3; binding to DERL3 is poorer than that between DERL2 and DERL3. Interacts (via SHP-box motif) with VCP. Interacts with AMFR, SELENOS, SEL1L, SELENOK and SYVN1, as well as with SEL1L-SYVN1 and VCP-SELENOS protein complexes; this interaction is weaker than that observed between DERL2 and these complexes. Interacts with NGLY1 and YOD1. Does not bind to EDEM1. Interacts with DNAJB9. Interacts with RNF103. Interacts with HM13. Interacts with XBP1 isoform 1 (via luminal/ectodomain domain); the interaction obviates the need for ectodomain shedding prior HM13/SPP-mediated XBP1 isoform 1 cleavage. Interacts with the signal recognition particle/SRP and the SRP receptor; in the process of endoplasmic reticulum stress-induced pre-emptive quality control. May interact with UBXN6. Interacts with ZFAND2B; probably through VCP. Interacts with CCDC47. Interacts with C18orf32. May interact with TRAM1. Forms a complex with SVIP and VCP/p97. (Microbial infection) Interacts with the cytomegalovirus US11 protein. As to expression, ubiquitous.

Its subcellular location is the endoplasmic reticulum membrane. Functional component of endoplasmic reticulum-associated degradation (ERAD) for misfolded lumenal proteins. Forms homotetramers which encircle a large channel traversing the endoplasmic reticulum (ER) membrane. This allows the retrotranslocation of misfolded proteins from the ER into the cytosol where they are ubiquitinated and degraded by the proteasome. The channel has a lateral gate within the membrane which provides direct access to membrane proteins with no need to reenter the ER lumen first. May mediate the interaction between VCP and the misfolded protein. Also involved in endoplasmic reticulum stress-induced pre-emptive quality control, a mechanism that selectively attenuates the translocation of newly synthesized proteins into the endoplasmic reticulum and reroutes them to the cytosol for proteasomal degradation. By controlling the steady-state expression of the IGF1R receptor, indirectly regulates the insulin-like growth factor receptor signaling pathway. Functionally, (Microbial infection) In case of infection by cytomegaloviruses, it plays a central role in the export from the ER and subsequent degradation of MHC class I heavy chains via its interaction with US11 viral protein, which recognizes and associates with MHC class I heavy chains. Also participates in the degradation process of misfolded cytomegalovirus US2 protein. The polypeptide is Derlin-1 (Homo sapiens (Human)).